The chain runs to 237 residues: Purine nucleoside phosphorylase DeoD-type (237 aa).

Histidine 4 lines the a purine D-ribonucleoside pocket. Residues glycine 20, arginine 24, arginine 43, and 87 to 90 each bind phosphate; that span reads RVGT. A purine D-ribonucleoside is bound by residues 179–181 and 203–204; these read EME and SD. Aspartate 204 serves as the catalytic Proton donor.

Belongs to the PNP/UDP phosphorylase family. In terms of assembly, homohexamer; trimer of homodimers.

It catalyses the reaction a purine D-ribonucleoside + phosphate = a purine nucleobase + alpha-D-ribose 1-phosphate. The catalysed reaction is a purine 2'-deoxy-D-ribonucleoside + phosphate = a purine nucleobase + 2-deoxy-alpha-D-ribose 1-phosphate. Its function is as follows. Catalyzes the reversible phosphorolytic breakdown of the N-glycosidic bond in the beta-(deoxy)ribonucleoside molecules, with the formation of the corresponding free purine bases and pentose-1-phosphate. The chain is Purine nucleoside phosphorylase DeoD-type from Streptococcus pyogenes serotype M4 (strain MGAS10750).